Reading from the N-terminus, the 88-residue chain is Synaptonemal complex central element protein 3 (88 aa).

The stretch at 7-75 (EERNYDNMLK…FVNCKEEMEK (69 aa)) forms a coiled coil.

Homodimer. Can form higher-order homooligomers. Interacts with SYCP1 (via tetrameric core); the interaction remodels SYCP1 homotetramers to 2:1 heterotrimers with SYCE3. SYCP1/SYCE3 heterotrimers form lattice assemblies as part of the mature synaptonemal complex via both lateral and head-to-head interactions. Interacts with the SYCE1-SIX6OS1 complex; the interaction recruits the SYCE1-SIX6OS1 complex to the central element of the synaptonemal complex. Interacts with the SYCE2-TEX12 complex; the interaction promotes fibrous assembly of SYCE2-TEX12 as part of the synaptonemal complex central element. Interacts with SYCE1. Interacts with SYCE2. Interacts with proteasome subunit PSMA8; to participate in meiosis progression during spermatogenesis. Interacts with SPO16.

The protein localises to the nucleus. It is found in the chromosome. Its function is as follows. Major component of the transverse central element of synaptonemal complexes (SCS), formed between homologous chromosomes during meiotic prophase. Required for the assembly of the central element of the synaptonemal complex during meiosis, via remodeling of SYCP1 lattice structures and promoting recruitment of SYCE2-TEX12 and SYCE1-SIX60S1 complexes. Required for chromosome loading of the central element-specific SCS proteins, and for initiating synapsis between homologous chromosomes. Chromosome loading appears to require SYCP1. Required for fertility and normal testis development. The protein is Synaptonemal complex central element protein 3 of Homo sapiens (Human).